We begin with the raw amino-acid sequence, 64 residues long: Probable tautomerase lp_1712 (64 aa).

Residue proline 2 is the Proton acceptor; via imino nitrogen of the active site.

This sequence belongs to the 4-oxalocrotonate tautomerase family.

The protein is Probable tautomerase lp_1712 of Lactiplantibacillus plantarum (strain ATCC BAA-793 / NCIMB 8826 / WCFS1) (Lactobacillus plantarum).